Consider the following 431-residue polypeptide: Enolase (431 aa).

Residue Gln-164 participates in (2R)-2-phosphoglycerate binding. The active-site Proton donor is the Glu-206. Residues Asp-243, Glu-286, and Asp-313 each coordinate Mg(2+). Positions 338, 367, 368, and 389 each coordinate (2R)-2-phosphoglycerate. Lys-338 serves as the catalytic Proton acceptor.

The protein belongs to the enolase family. Mg(2+) is required as a cofactor.

It is found in the cytoplasm. The protein resides in the secreted. It localises to the cell surface. The enzyme catalyses (2R)-2-phosphoglycerate = phosphoenolpyruvate + H2O. It participates in carbohydrate degradation; glycolysis; pyruvate from D-glyceraldehyde 3-phosphate: step 4/5. Functionally, catalyzes the reversible conversion of 2-phosphoglycerate (2-PG) into phosphoenolpyruvate (PEP). It is essential for the degradation of carbohydrates via glycolysis. In Chloroflexus aggregans (strain MD-66 / DSM 9485), this protein is Enolase.